Here is a 249-residue protein sequence, read N- to C-terminus: 2,3-bisphosphoglycerate-dependent phosphoglycerate mutase (249 aa).

Residues 9–16 (RHGQSQWN), 22–23 (TG), arginine 61, 88–91 (ERHY), lysine 99, 115–116 (RR), and 184–185 (GN) each bind substrate. Residue histidine 10 is the Tele-phosphohistidine intermediate of the active site. The Proton donor/acceptor role is filled by glutamate 88.

This sequence belongs to the phosphoglycerate mutase family. BPG-dependent PGAM subfamily. Homodimer.

The enzyme catalyses (2R)-2-phosphoglycerate = (2R)-3-phosphoglycerate. It functions in the pathway carbohydrate degradation; glycolysis; pyruvate from D-glyceraldehyde 3-phosphate: step 3/5. Its function is as follows. Catalyzes the interconversion of 2-phosphoglycerate and 3-phosphoglycerate. The polypeptide is 2,3-bisphosphoglycerate-dependent phosphoglycerate mutase (Xanthomonas oryzae pv. oryzae (strain MAFF 311018)).